The sequence spans 366 residues: Anhydro-N-acetylmuramic acid kinase (366 aa).

10–17 (GTSLDGVD) lines the ATP pocket.

This sequence belongs to the anhydro-N-acetylmuramic acid kinase family.

It catalyses the reaction 1,6-anhydro-N-acetyl-beta-muramate + ATP + H2O = N-acetyl-D-muramate 6-phosphate + ADP + H(+). It functions in the pathway amino-sugar metabolism; 1,6-anhydro-N-acetylmuramate degradation. It participates in cell wall biogenesis; peptidoglycan recycling. Functionally, catalyzes the specific phosphorylation of 1,6-anhydro-N-acetylmuramic acid (anhMurNAc) with the simultaneous cleavage of the 1,6-anhydro ring, generating MurNAc-6-P. Is required for the utilization of anhMurNAc either imported from the medium or derived from its own cell wall murein, and thus plays a role in cell wall recycling. In Nitrobacter winogradskyi (strain ATCC 25391 / DSM 10237 / CIP 104748 / NCIMB 11846 / Nb-255), this protein is Anhydro-N-acetylmuramic acid kinase.